The sequence spans 215 residues: Cytochrome b6 (215 aa).

A helical membrane pass occupies residues isoleucine 32–phenylalanine 52. Residue cysteine 35 participates in heme c binding. Positions 86 and 100 each coordinate heme b. The next 3 membrane-spanning stretches (helical) occupy residues alanine 90–phenylalanine 110, leucine 116–tyrosine 136, and leucine 186–isoleucine 206. Residues histidine 187 and histidine 202 each coordinate heme b.

It belongs to the cytochrome b family. PetB subfamily. In terms of assembly, the 4 large subunits of the cytochrome b6-f complex are cytochrome b6, subunit IV (17 kDa polypeptide, PetD), cytochrome f and the Rieske protein, while the 4 small subunits are PetG, PetL, PetM and PetN. The complex functions as a dimer. Requires heme b as cofactor. It depends on heme c as a cofactor.

The protein resides in the plastid. Its subcellular location is the chloroplast thylakoid membrane. In terms of biological role, component of the cytochrome b6-f complex, which mediates electron transfer between photosystem II (PSII) and photosystem I (PSI), cyclic electron flow around PSI, and state transitions. This chain is Cytochrome b6, found in Marchantia polymorpha (Common liverwort).